The primary structure comprises 273 residues: Ribosomal RNA small subunit methyltransferase A (273 aa).

H10, L12, G37, E58, D83, and N108 together coordinate S-adenosyl-L-methionine.

It belongs to the class I-like SAM-binding methyltransferase superfamily. rRNA adenine N(6)-methyltransferase family. RsmA subfamily.

The protein resides in the cytoplasm. It catalyses the reaction adenosine(1518)/adenosine(1519) in 16S rRNA + 4 S-adenosyl-L-methionine = N(6)-dimethyladenosine(1518)/N(6)-dimethyladenosine(1519) in 16S rRNA + 4 S-adenosyl-L-homocysteine + 4 H(+). Specifically dimethylates two adjacent adenosines (A1518 and A1519) in the loop of a conserved hairpin near the 3'-end of 16S rRNA in the 30S particle. May play a critical role in biogenesis of 30S subunits. The sequence is that of Ribosomal RNA small subunit methyltransferase A from Picosynechococcus sp. (strain ATCC 27264 / PCC 7002 / PR-6) (Agmenellum quadruplicatum).